Reading from the N-terminus, the 65-residue chain is Large ribosomal subunit protein bL35 (65 aa).

This sequence belongs to the bacterial ribosomal protein bL35 family.

The chain is Large ribosomal subunit protein bL35 from Prochlorococcus marinus (strain MIT 9313).